The primary structure comprises 448 residues: Homogentisate 1,2-dioxygenase (448 aa).

The Proton acceptor role is filled by H303. Fe cation is bound by residues H346 and E352. The homogentisate site is built by Y361 and H382. Residue H382 coordinates Fe cation.

This sequence belongs to the homogentisate dioxygenase family. As to quaternary structure, hexamer; dimer of trimers. The cofactor is Fe cation.

It catalyses the reaction homogentisate + O2 = 4-maleylacetoacetate + H(+). It participates in amino-acid degradation; L-phenylalanine degradation; acetoacetate and fumarate from L-phenylalanine: step 4/6. Involved in the catabolism of homogentisate (2,5-dihydroxyphenylacetate or 2,5-OH-PhAc), a central intermediate in the degradation of phenylalanine and tyrosine. Catalyzes the oxidative ring cleavage of the aromatic ring of homogentisate to yield maleylacetoacetate. In Nitrobacter hamburgensis (strain DSM 10229 / NCIMB 13809 / X14), this protein is Homogentisate 1,2-dioxygenase.